Consider the following 158-residue polypeptide: uncharacterized protein (158 aa).

A signal peptide spans 1–30; the sequence is MNKKFLKCGTLFLISCSILGSTIPAVTVFS.

This is an uncharacterized protein from Streptococcus pneumoniae serotype 2 (strain D39 / NCTC 7466).